A 146-amino-acid polypeptide reads, in one-letter code: uncharacterized protein (146 aa).

This is an uncharacterized protein from Escherichia coli (strain K12).